Here is a 299-residue protein sequence, read N- to C-terminus: Probable lipid kinase YegS-like (299 aa).

One can recognise a DAGKc domain in the interval 2–133 (ATFPASLLIL…IDIAQVNDKT (132 aa)). ATP-binding positions include Thr-40, 66-72 (GDGTINE), and Thr-95. Residues Leu-215, Asp-218, and Leu-220 each coordinate Mg(2+). Glu-271 acts as the Proton acceptor in catalysis.

It belongs to the diacylglycerol/lipid kinase family. YegS lipid kinase subfamily. Mg(2+) serves as cofactor. The cofactor is Ca(2+).

It localises to the cytoplasm. Its function is as follows. Probably phosphorylates lipids; the in vivo substrate is unknown. The chain is Probable lipid kinase YegS-like from Citrobacter koseri (strain ATCC BAA-895 / CDC 4225-83 / SGSC4696).